The primary structure comprises 155 residues: Small ribosomal subunit protein uS7 (155 aa).

The protein belongs to the universal ribosomal protein uS7 family. As to quaternary structure, part of the 30S ribosomal subunit. Contacts proteins S9 and S11.

One of the primary rRNA binding proteins, it binds directly to 16S rRNA where it nucleates assembly of the head domain of the 30S subunit. Is located at the subunit interface close to the decoding center, probably blocks exit of the E-site tRNA. The sequence is that of Small ribosomal subunit protein uS7 from Petrotoga mobilis (strain DSM 10674 / SJ95).